Consider the following 256-residue polypeptide: uncharacterized protein (256 aa).

A signal peptide spans 1–22 (MGYLKRFALYISVMILIFAIAG). Cys23 is lipidated: N-palmitoyl cysteine. A lipid anchor (S-diacylglycerol cysteine) is attached at Cys23.

Belongs to the staphylococcal tandem lipoprotein family.

It is found in the cell membrane. This is an uncharacterized protein from Staphylococcus aureus (strain COL).